Consider the following 153-residue polypeptide: S-ribosylhomocysteine lyase (153 aa).

Fe cation-binding residues include histidine 57, histidine 61, and cysteine 124.

Belongs to the LuxS family. As to quaternary structure, homodimer. It depends on Fe cation as a cofactor.

It catalyses the reaction S-(5-deoxy-D-ribos-5-yl)-L-homocysteine = (S)-4,5-dihydroxypentane-2,3-dione + L-homocysteine. In terms of biological role, involved in the synthesis of autoinducer 2 (AI-2) which is secreted by bacteria and is used to communicate both the cell density and the metabolic potential of the environment. The regulation of gene expression in response to changes in cell density is called quorum sensing. Catalyzes the transformation of S-ribosylhomocysteine (RHC) to homocysteine (HC) and 4,5-dihydroxy-2,3-pentadione (DPD). This Oceanobacillus iheyensis (strain DSM 14371 / CIP 107618 / JCM 11309 / KCTC 3954 / HTE831) protein is S-ribosylhomocysteine lyase.